The chain runs to 328 residues: D-cysteine desulfhydrase (328 aa).

N6-(pyridoxal phosphate)lysine is present on Lys51.

This sequence belongs to the ACC deaminase/D-cysteine desulfhydrase family. As to quaternary structure, homodimer. Pyridoxal 5'-phosphate serves as cofactor.

The enzyme catalyses D-cysteine + H2O = hydrogen sulfide + pyruvate + NH4(+) + H(+). Catalyzes the alpha,beta-elimination reaction of D-cysteine and of several D-cysteine derivatives. It could be a defense mechanism against D-cysteine. In Shigella flexneri serotype 5b (strain 8401), this protein is D-cysteine desulfhydrase.